Consider the following 688-residue polypeptide: Pentatricopeptide repeat-containing protein At3g18020 (688 aa).

PPR repeat units follow at residues 53-88, 89-123, 124-158, 161-195, 196-230, 231-261, 271-305, 306-340, 341-375, 376-406, 411-445, 446-480, 482-517, 518-552, 553-583, 588-622, and 623-657; these read DRAY…GYRP, DSLN…GFIP, DERT…KKEF, SLTN…GHLP, DVVT…GIRP, NSLT…LWEY, KAAA…ESVN, VEFA…GLKP, RRTS…EFFP, SEYT…MLRK, RTRI…DCRP, DEYT…KFCA, DAVT…KIKP, GVVA…SVTA, DSTT…VIWP, DAFV…GAIP, and NVVC…GQAP.

The protein belongs to the PPR family. P subfamily.

This chain is Pentatricopeptide repeat-containing protein At3g18020, found in Arabidopsis thaliana (Mouse-ear cress).